Consider the following 722-residue polypeptide: Inactive serine protease PAMR1 (722 aa).

The signal sequence occupies residues 1–21 (MALLVWSSLVVASLHLLGTAA). N98 carries an N-linked (GlcNAc...) asparagine glycan. 8 cysteine pairs are disulfide-bonded: C130–C152, C179–C201, C241–C252, C246–C262, C264–C273, C282–C331, C317–C344, and C416–C444. A CUB domain is found at 130–238 (CGEVIQAARG…DGFYVTFEEV (109 aa)). The EGF-like domain maps to 237 to 274 (EVTGCSSTPCFHDGTCIADKTGSYRCACLAGYTGRHCE). 2 Sushi domains span residues 280-346 (KSCK…VCIK) and 393-446 (KPAL…SCIP). N-linked (GlcNAc...) asparagine glycosylation is present at N318. Residues 447–722 (ICGKLENFNI…FKEWLEKNMK (276 aa)) enclose the Peptidase S1 domain. N455 carries an N-linked (GlcNAc...) asparagine glycan. C491 and C507 are oxidised to a cystine. N-linked (GlcNAc...) asparagine glycosylation is present at N616. Cystine bridges form between C632–C651 and C663–C699.

It belongs to the peptidase S1 family.

The protein resides in the secreted. Its function is as follows. May play a role in regeneration of skeletal muscle. This is Inactive serine protease PAMR1 (pamr1) from Xenopus tropicalis (Western clawed frog).